The sequence spans 426 residues: Glucan endo-1,3-beta-glucosidase 11 (426 aa).

An N-terminal signal peptide occupies residues 1 to 30 (MELTSFHRSSLLFLISLTLIILPTTTTSIG). Residue Asn112 is glycosylated (N-linked (GlcNAc...) asparagine). The Proton donor role is filled by Glu121. Asn126 is a glycosylation site (N-linked (GlcNAc...) asparagine). The active-site Nucleophile is Glu266. Gly residues predominate over residues 360–372 (GGGTGGGNSSSGG). The segment at 360–389 (GGGTGGGNSSSGGGRDKSPVFPVSPVAPDS) is disordered. N-linked (GlcNAc...) asparagine glycosylation is present at Asn367. Ser398 carries the GPI-anchor amidated serine lipid modification. Residues 399-426 (ASPVTGKRKGKGAILSLVVSMLLARHLL) constitute a propeptide, removed in mature form.

Belongs to the glycosyl hydrolase 17 family.

The protein resides in the secreted. The protein localises to the cell wall. It localises to the cell membrane. It catalyses the reaction Hydrolysis of (1-&gt;3)-beta-D-glucosidic linkages in (1-&gt;3)-beta-D-glucans.. This chain is Glucan endo-1,3-beta-glucosidase 11, found in Arabidopsis thaliana (Mouse-ear cress).